A 453-amino-acid polypeptide reads, in one-letter code: tRNA modification GTPase MnmE (453 aa).

3 residues coordinate (6S)-5-formyl-5,6,7,8-tetrahydrofolate: arginine 22, glutamate 79, and lysine 119. In terms of domain architecture, TrmE-type G spans 215-376 (GMKVVIAGRP…LKQHLKSLMG (162 aa)). Residue asparagine 225 coordinates K(+). Residues 225-230 (NAGKSS), 244-250 (TEIAGTT), 269-272 (DTAG), and 334-337 (NKAD) contribute to the GTP site. Position 229 (serine 229) interacts with Mg(2+). K(+) contacts are provided by threonine 244, isoleucine 246, and threonine 249. Threonine 250 is a Mg(2+) binding site. Lysine 453 serves as a coordination point for (6S)-5-formyl-5,6,7,8-tetrahydrofolate.

The protein belongs to the TRAFAC class TrmE-Era-EngA-EngB-Septin-like GTPase superfamily. TrmE GTPase family. Homodimer. Heterotetramer of two MnmE and two MnmG subunits. K(+) serves as cofactor.

The protein localises to the cytoplasm. Exhibits a very high intrinsic GTPase hydrolysis rate. Involved in the addition of a carboxymethylaminomethyl (cmnm) group at the wobble position (U34) of certain tRNAs, forming tRNA-cmnm(5)s(2)U34. The sequence is that of tRNA modification GTPase MnmE from Shewanella pealeana (strain ATCC 700345 / ANG-SQ1).